Reading from the N-terminus, the 406-residue chain is Ubiquitin-associated domain-containing protein 1 (406 aa).

Residues 14–98 (LRLHICSLDG…LLLVKKRAPP (85 aa)) enclose the Ubiquitin-like domain. Positions 95–122 (RAPPPTPKMAEVSADEKRKQDQKAPDKD) are disordered. The span at 108 to 122 (ADEKRKQDQKAPDKD) shows a compositional bias: basic and acidic residues. One can recognise a UBA 1 domain in the interval 186-231 (EDDEDRVDEVALRQLTEMGFPESRAVKALRLNHMSVTQAMEWLIEH). Residues 238–257 (DAPLPCENSSEAAGGLATGE) show a composition bias toward low complexity. Residues 238–272 (DAPLPCENSSEAAGGLATGEAETKPTLGAGAEDPK) form a disordered region. The UBA 2 domain occupies 289–329 (RPDPRAVIALMEMGFDEKEVIDALRVNNNQQDAACEWLLGD). One can recognise an STI1 domain in the interval 354–393 (NPVVQLGLTNPKTLLAFEDMLENPLNSTQWMNDPETGPVM).

As to quaternary structure, component of the KPC complex.

The protein resides in the cytoplasm. It functions in the pathway protein modification; protein ubiquitination. Functionally, non-catalytic component of the KPC complex, a E3 ubiquitin-protein ligase complex that mediates polyubiquitination of target proteins, such as CDKN1B and NFKB1. Within the KPC complex, UBAC1 acts as an adapter that promotes the transfer of target proteins that have been polyubiquitinated by RNF123/KPC1 to the 26S proteasome. This chain is Ubiquitin-associated domain-containing protein 1 (ubac1), found in Xenopus tropicalis (Western clawed frog).